Here is a 369-residue protein sequence, read N- to C-terminus: Anhydro-N-acetylmuramic acid kinase (369 aa).

12–19 (GTSMDGVD) contacts ATP.

Belongs to the anhydro-N-acetylmuramic acid kinase family.

The catalysed reaction is 1,6-anhydro-N-acetyl-beta-muramate + ATP + H2O = N-acetyl-D-muramate 6-phosphate + ADP + H(+). It participates in amino-sugar metabolism; 1,6-anhydro-N-acetylmuramate degradation. Its pathway is cell wall biogenesis; peptidoglycan recycling. In terms of biological role, catalyzes the specific phosphorylation of 1,6-anhydro-N-acetylmuramic acid (anhMurNAc) with the simultaneous cleavage of the 1,6-anhydro ring, generating MurNAc-6-P. Is required for the utilization of anhMurNAc either imported from the medium or derived from its own cell wall murein, and thus plays a role in cell wall recycling. This Shewanella sp. (strain MR-4) protein is Anhydro-N-acetylmuramic acid kinase.